A 456-amino-acid chain; its full sequence is Exodeoxyribonuclease 7 large subunit (456 aa).

It belongs to the XseA family. As to quaternary structure, heterooligomer composed of large and small subunits.

It localises to the cytoplasm. The enzyme catalyses Exonucleolytic cleavage in either 5'- to 3'- or 3'- to 5'-direction to yield nucleoside 5'-phosphates.. Functionally, bidirectionally degrades single-stranded DNA into large acid-insoluble oligonucleotides, which are then degraded further into small acid-soluble oligonucleotides. This is Exodeoxyribonuclease 7 large subunit from Lactobacillus delbrueckii subsp. bulgaricus (strain ATCC BAA-365 / Lb-18).